Consider the following 208-residue polypeptide: Putative dioxygenase RF_0617 (208 aa).

This sequence belongs to the intradiol ring-cleavage dioxygenase family.

The chain is Putative dioxygenase RF_0617 from Rickettsia felis (strain ATCC VR-1525 / URRWXCal2) (Rickettsia azadi).